Consider the following 67-residue polypeptide: Potassium channel toxin alpha-KTx (67 aa).

The N-terminal stretch at 1 to 25 (MKNIAMKTTVVLTILLLSVLTAINA) is a signal peptide. Positions 26-31 (DTMKKR) are excised as a propeptide. 4 disulfide bridges follow: C35–C54, C40–C59, C44–C61, and C49–C64.

Belongs to the short scorpion toxin superfamily. Potassium channel inhibitor family. In terms of tissue distribution, expressed by the venom gland.

It localises to the secreted. Functionally, blocks Kv1.1/KCNA1, Kv1.2/KCNA2 and Kv1.3/KCNA3 voltage-gated potassium channels. The chain is Potassium channel toxin alpha-KTx from Hoffmannihadrurus gertschi (Scorpion).